Reading from the N-terminus, the 270-residue chain is Putative carboxymethylenebutenolidase (270 aa).

Catalysis depends on residues cysteine 147, aspartate 204, and histidine 236.

This sequence belongs to the dienelactone hydrolase family.

The catalysed reaction is 2-(5-oxo-2,5-dihydrofuran-2-ylidene)acetate + H2O = 4-oxohex-2-enedioate + H(+). This Salmonella typhimurium (strain LT2 / SGSC1412 / ATCC 700720) protein is Putative carboxymethylenebutenolidase (ysgA).